A 57-amino-acid polypeptide reads, in one-letter code: Aspartyl-phosphate phosphatase YnzD (57 aa).

The protein belongs to the spo0E family.

Functionally, aspartyl-phosphate phosphatase which specifically dephosphorylates the sporulation transcription factor Spo0A-P and negatively regulates the sporulation initiation pathway in order to control the proper timing of sporulation. This Bacillus subtilis (strain 168) protein is Aspartyl-phosphate phosphatase YnzD (ynzD).